The sequence spans 1133 residues: Roquin-1 (1133 aa).

Cys14, Cys17, Cys33, His35, Cys38, Cys50, and Asp53 together coordinate Zn(2+). The RING-type; degenerate zinc-finger motif lies at 14 to 54; sequence CPICTQTFDETIRKPISLGCGHTVCKMCLNKLHRKACPFDQ. An HEPN-N region spans residues 89-173; sequence GVEDTKHYEE…RTVTELILQH (85 aa). Residues 174 to 326 are ROQ; that stretch reads QNPQQLSSNL…MQSIIDKLQT (153 aa). The interval 327–396 is HEPN-C; it reads PASFAQSVQE…VVHGLVDYIQ (70 aa). Residues 413–441 form a C3H1-type zinc finger; that stretch reads KYKTYMCRDMKQRGGCPRGASCTFAHSQE. 4 positions are modified to phosphoserine: Ser462, Ser531, Ser535, and Ser863. The disordered stretch occupies residues 505–542; it reads TQLIPRGTDPSYDSSLKPGKIDHLSSSAPGSPPDLLES. Disordered stretches follow at residues 1000–1019, 1058–1078, and 1094–1133; these read NTLAGQSQPPPPPPPKWPGM, NTSKQAENGQPEPQNKVPAED, and QENISLLSNKTSSLNLSEDPEGGGDNNDSQRSGVTPSSAP. Residues 1007 to 1016 are compositionally biased toward pro residues; it reads QPPPPPPPKW. Polar residues predominate over residues 1058-1070; the sequence is NTSKQAENGQPEP. Low complexity predominate over residues 1096-1110; that stretch reads NISLLSNKTSSLNLS. Ser1110 bears the Phosphoserine mark. Residues 1119 to 1133 are compositionally biased toward polar residues; it reads NNDSQRSGVTPSSAP.

In terms of assembly, able to homodimerize. Interacts with DDX6 and EDC4. Interacts with CCR4-NOT deadenylase complex. Interacts with RC3H1; the interaction is RNA independent. In terms of processing, proteolytically cleaved after Arg-510 and Arg-579 by MALT1 in activated CD4(+) T cells; cleavage at Arg-510 and Arg-579 is critical for promoting RC3H1 degradation in response to T-cell receptor (TCR) stimulation, and hence is necessary for prolonging the stability of a set of mRNAs controlling Th17 cell differentiation. Widely expressed. Expressed at higher level in cerebellum, spleen, ovary and liver.

Its subcellular location is the cytoplasm. The protein resides in the P-body. It is found in the cytoplasmic granule. The catalysed reaction is S-ubiquitinyl-[E2 ubiquitin-conjugating enzyme]-L-cysteine + [acceptor protein]-L-lysine = [E2 ubiquitin-conjugating enzyme]-L-cysteine + N(6)-ubiquitinyl-[acceptor protein]-L-lysine.. The protein operates within protein modification; protein ubiquitination. In terms of biological role, post-transcriptional repressor of mRNAs containing a conserved stem loop motif, called constitutive decay element (CDE), which is often located in the 3'-UTR, as in HMGXB3, ICOS, IER3, NFKBID, NFKBIZ, PPP1R10, TNF, TNFRSF4 and in many more mRNAs. Cleaves translationally inactive mRNAs harboring a stem-loop (SL), often located in their 3'-UTRs, during the early phase of inflammation in a helicase UPF1-independent manner. Binds to CDE and promotes mRNA deadenylation and degradation. This process does not involve miRNAs. In follicular helper T (Tfh) cells, represses of ICOS and TNFRSF4 expression, thus preventing spontaneous Tfh cell differentiation, germinal center B-cell differentiation in the absence of immunization and autoimmunity. In resting or LPS-stimulated macrophages, controls inflammation by suppressing TNF expression. Also recognizes CDE in its own mRNA and in that of paralogous RC3H2, possibly leading to feedback loop regulation. Recognizes and binds mRNAs containing a hexaloop stem-loop motif, called alternative decay element (ADE). Together with ZC3H12A, destabilizes TNFRSF4/OX40 mRNA by binding to the conserved stem loop structure in its 3'UTR. Able to interact with double-stranded RNA (dsRNA). miRNA-binding protein that regulates microRNA homeostasis. Enhances DICER-mediated processing of pre-MIR146a but reduces mature MIR146a levels through an increase of 3' end uridylation. Both inhibits ICOS mRNA expression and they may act together to exert the suppression. Acts as a ubiquitin E3 ligase. Pairs with E2 enzymes UBE2A, UBE2B, UBE2D2, UBE2F, UBE2G1, UBE2G2 and UBE2L3 and produces polyubiquitin chains. Shows the strongest activity when paired with UBE2N:UBE2V1 or UBE2N:UBE2V2 E2 complexes and generate both short and long polyubiquitin chains. The polypeptide is Roquin-1 (Homo sapiens (Human)).